The chain runs to 199 residues: NADH-quinone oxidoreductase subunit C (199 aa).

This sequence belongs to the complex I 30 kDa subunit family. As to quaternary structure, NDH-1 is composed of 14 different subunits. Subunits NuoB, C, D, E, F, and G constitute the peripheral sector of the complex.

Its subcellular location is the cell inner membrane. It carries out the reaction a quinone + NADH + 5 H(+)(in) = a quinol + NAD(+) + 4 H(+)(out). In terms of biological role, NDH-1 shuttles electrons from NADH, via FMN and iron-sulfur (Fe-S) centers, to quinones in the respiratory chain. The immediate electron acceptor for the enzyme in this species is believed to be ubiquinone. Couples the redox reaction to proton translocation (for every two electrons transferred, four hydrogen ions are translocated across the cytoplasmic membrane), and thus conserves the redox energy in a proton gradient. This chain is NADH-quinone oxidoreductase subunit C, found in Leptothrix cholodnii (strain ATCC 51168 / LMG 8142 / SP-6) (Leptothrix discophora (strain SP-6)).